We begin with the raw amino-acid sequence, 706 residues long: MNPQQQRMAAIGTDKELSDLLDFSAMFSPPVNSGKTRPTTLGSSQFSGSGMDERGGTTSWGTSGQPSPSYDSSRGFTDSPHYSDHLNDSRLGTHEGLSPTPFMNSNLIGKTSERGSFSLYSRDSGLSGCQSSLLRQDLGLGSPAQLSSSGKPGTPYYSFSATSSRRRPLHDSVALDPLQAKKVRKVPPGLPSSVYAPSPNSDDFNRESPSYPSPKPPTSMFASTFFMQDGTHSSSDLWSSSNGMSQPGFGGILGTSTSHMSQSSSYGSLHSHDRLSYPPHSVSPTDINTSLPPMSSFHRGSTSSSPYVAASHTPPINGSDSILGTRGNAAGSSQTGDALGKALASIYSPDHTSSSFPSNPSTPVGSPSPLTGTSQWPRAGGQAPSSPSYENSLHSLKNRVEQQLHEHLQDAMSFLKDVCEQSRMEDRLDRLDDAIHVLRNHAVGPSTSLPTSHSDIHSLLGPSHNASIGNLNSNYGGSSLVTNSRSASMVGTHREDSVSLNGNHSVLSSTVAASNTELNHKTPENFRGGVQNQSGSVVPTEIKTENKEKDENLHEPPSSDDMKSDDESSQKDIKVSSRGRTSSTNEDEDLNPEQKIEREKERRMANNARERLRVRDINEAFKELGRMCQLHLKSEKPQTKLLILHQAVAVILSLEQQVRERNLNPKAACLKRREEEKVSAASAEPPNTLPGAHPGLSESTNPMGHL.

A disordered region spans residues 25 to 109 (AMFSPPVNSG…TPFMNSNLIG (85 aa)). Composition is skewed to polar residues over residues 30-48 (PVNS…QFSG) and 56-76 (GTTS…SRGF). 3 positions are modified to phosphoserine: S47, S67, and S79. Positions 81-93 (HYSDHLNDSRLGT) are enriched in basic and acidic residues. S98 carries the phosphoserine modification. A Glycyl lysine isopeptide (Lys-Gly) (interchain with G-Cter in SUMO2) cross-link involves residue K110. A phosphoserine mark is found at S116 and S124. Residues 119–140 (LYSRDSGLSGCQSSLLRQDLGL) are leucine-zipper. Disordered stretches follow at residues 140–222 (LGSP…SMFA) and 249–313 (FGGI…ASHT). Polar residues predominate over residues 144–163 (AQLSSSGKPGTPYYSFSATS). Residue K181 forms a Glycyl lysine isopeptide (Lys-Gly) (interchain with G-Cter in SUMO2) linkage. The short motif at 181–188 (KKVRKVPP) is the Nuclear localization signal element. Over residues 256–269 (STSHMSQSSSYGSL) the composition is skewed to low complexity. Positions 282 to 306 (VSPTDINTSLPPMSSFHRGSTSSSP) are enriched in polar residues. T313 carries the phosphothreonine modification. S333 is subject to Phosphoserine. 2 disordered regions span residues 349–392 (PDHT…YENS) and 520–604 (HKTP…ERRM). Positions 352 to 363 (TSSSFPSNPSTP) are enriched in low complexity. Polar residues-rich tracts occupy residues 364–376 (VGSP…TSQW) and 383–392 (APSSPSYENS). The residue at position 392 (S392) is a Phosphoserine. 2 stretches are compositionally biased toward basic and acidic residues: residues 542-554 (IKTE…ENLH) and 560-575 (DDMK…DIKV). K543 participates in a covalent cross-link: Glycyl lysine isopeptide (Lys-Gly) (interchain with G-Cter in SUMO2). A Phosphoserine modification is found at S564. Residue K574 forms a Glycyl lysine isopeptide (Lys-Gly) (interchain with G-Cter in SUMO2) linkage. Residue T581 is modified to Phosphothreonine. 2 positions are modified to phosphoserine: S582 and S583. The segment covering 592–604 (PEQKIEREKERRM) has biased composition (basic and acidic residues). The 54-residue stretch at 601–654 (ERRMANNARERLRVRDINEAFKELGRMCQLHLKSEKPQTKLLILHQAVAVILSL) folds into the bHLH domain. Residues K633 and K677 each participate in a glycyl lysine isopeptide (Lys-Gly) (interchain with G-Cter in SUMO2) cross-link. Residues 656-679 (QQVRERNLNPKAACLKRREEEKVS) form a class A specific domain region. Residues 674 to 706 (EEEKVSAASAEPPNTLPGAHPGLSESTNPMGHL) are disordered. Polar residues predominate over residues 697 to 706 (SESTNPMGHL).

In terms of assembly, efficient DNA binding requires dimerization with another bHLH protein. Forms homo- or heterooligomers with myogenin, E12 and ITF2 proteins and RUNX1T1. Interacts with PTF1A. Interacts with NEUROD2. Interacts with BHLHA9. As to expression, widely expressed.

The protein resides in the nucleus. In terms of biological role, transcriptional regulator. Involved in the initiation of neuronal differentiation. Activates transcription by binding to the E box (5'-CANNTG-3'). May be involved in the functional network that regulates the development of the GnRH axis. The chain is Transcription factor 12 (Tcf12) from Mus musculus (Mouse).